We begin with the raw amino-acid sequence, 271 residues long: ELH (271 aa).

A signal peptide spans 1–28 (MKRPNNRPTNTMSLILCLTLSSLCVSSQ). 2 consecutive propeptides follow at residues 29-95 (SASV…NEKR) and 162-184 (AAGG…RRKR). The disordered stretch occupies residues 162–190 (AAGGMEQSEGQNPETESHSRRKRSVLTPS). K241 is subject to Lysine amide.

Belongs to the molluscan ELH family. Bag cell neurons.

It localises to the secreted. ELH acts as a neurotransmitter locally, upon neurons of the abdominal ganglion and as a hormone by diffusing into the circulating hemolymph and modulating the activity of other organs. It specifically causes contraction of smooth muscle in the ovotestis and expulsion of the egg string. Its function is as follows. Alpha-BCP decreases the activity of a cluster of neurons in the left upper quadrant of the abdominal ganglion. Functionally, beta-BCP specifically excites 2 neurons, L1 and R1, in the abdominal ganglion. The chain is ELH from Aplysia californica (California sea hare).